A 105-amino-acid polypeptide reads, in one-letter code: Late embryogenesis abundant protein Lea5-D (105 aa).

The disordered stretch occupies residues 48-67; the sequence is KVERRDAMKESSSSETRAYS. Low complexity predominate over residues 57–67; it reads ESSSSETRAYS.

It belongs to the LEA type 3 family.

This chain is Late embryogenesis abundant protein Lea5-D (LEA5-D), found in Gossypium hirsutum (Upland cotton).